A 160-amino-acid polypeptide reads, in one-letter code: Endoribonuclease YbeY (160 aa).

Residues His127, His131, and His137 each contribute to the Zn(2+) site.

Belongs to the endoribonuclease YbeY family. The cofactor is Zn(2+).

The protein localises to the cytoplasm. Functionally, single strand-specific metallo-endoribonuclease involved in late-stage 70S ribosome quality control and in maturation of the 3' terminus of the 16S rRNA. The protein is Endoribonuclease YbeY of Synechococcus sp. (strain RCC307).